A 241-amino-acid polypeptide reads, in one-letter code: 1-(5-phosphoribosyl)-5-[(5-phosphoribosylamino)methylideneamino] imidazole-4-carboxamide isomerase (241 aa).

Asp-7 (proton acceptor) is an active-site residue. The active-site Proton donor is the Asp-129.

It belongs to the HisA/HisF family.

It localises to the cytoplasm. The enzyme catalyses 1-(5-phospho-beta-D-ribosyl)-5-[(5-phospho-beta-D-ribosylamino)methylideneamino]imidazole-4-carboxamide = 5-[(5-phospho-1-deoxy-D-ribulos-1-ylimino)methylamino]-1-(5-phospho-beta-D-ribosyl)imidazole-4-carboxamide. Its pathway is amino-acid biosynthesis; L-histidine biosynthesis; L-histidine from 5-phospho-alpha-D-ribose 1-diphosphate: step 4/9. This chain is 1-(5-phosphoribosyl)-5-[(5-phosphoribosylamino)methylideneamino] imidazole-4-carboxamide isomerase, found in Buchnera aphidicola subsp. Baizongia pistaciae (strain Bp).